The chain runs to 398 residues: Glycerol-3-phosphate dehydrogenase [NAD(+)] 1 (398 aa).

Residues 50–55 (GSGNWG), Phe138, Lys161, and Ala194 contribute to the NAD(+) site. Position 161 (Lys161) interacts with substrate. Lys253 functions as the Proton acceptor in the catalytic mechanism. NAD(+)-binding residues include Arg318 and Gln350. 318 to 319 (RN) provides a ligand contact to substrate.

Belongs to the NAD-dependent glycerol-3-phosphate dehydrogenase family.

It localises to the cytoplasm. The enzyme catalyses sn-glycerol 3-phosphate + NAD(+) = dihydroxyacetone phosphate + NADH + H(+). This is Glycerol-3-phosphate dehydrogenase [NAD(+)] 1 (GPD1) from Yarrowia lipolytica (strain CLIB 122 / E 150) (Yeast).